Reading from the N-terminus, the 429-residue chain is [LysW]-aminoadipate semialdehyde transaminase (429 aa).

Pyridoxal 5'-phosphate is bound by residues 112 to 113 and F139; that span reads GT. R142 is a binding site for substrate. A pyridoxal 5'-phosphate-binding site is contributed by 226 to 229; the sequence is DEIQ. K255 bears the N6-(pyridoxal phosphate)lysine mark. T283 contacts substrate. T284 is a pyridoxal 5'-phosphate binding site. Positions 408–429 are disordered; it reads LRAQQSEMGQQQVSQGESVQTE. Over residues 411–429 the composition is skewed to low complexity; sequence QQSEMGQQQVSQGESVQTE.

This sequence belongs to the class-III pyridoxal-phosphate-dependent aminotransferase family. LysJ subfamily. As to quaternary structure, homodimer. Pyridoxal 5'-phosphate serves as cofactor.

It is found in the cytoplasm. The catalysed reaction is [amino-group carrier protein]-C-terminal-gamma-(L-lysyl)-L-glutamate + 2-oxoglutarate = [amino-group carrier protein]-C-terminal-N-(1-carboxy-5-oxopentan-1-yl)-L-glutamine + L-glutamate. It functions in the pathway amino-acid biosynthesis; L-lysine biosynthesis via AAA pathway; L-lysine from L-alpha-aminoadipate (Thermus route): step 4/5. In terms of biological role, catalyzes the transfer of the amino group of L-glutamate to [LysW]-aminoadipate 6-semialdehyde, generating [LysW]-gamma-L-lysine. This Deinococcus radiodurans (strain ATCC 13939 / DSM 20539 / JCM 16871 / CCUG 27074 / LMG 4051 / NBRC 15346 / NCIMB 9279 / VKM B-1422 / R1) protein is [LysW]-aminoadipate semialdehyde transaminase.